The sequence spans 522 residues: UPF0288 protein MTH_1865 (522 aa).

This sequence belongs to the UPF0288 family.

In Methanothermobacter thermautotrophicus (strain ATCC 29096 / DSM 1053 / JCM 10044 / NBRC 100330 / Delta H) (Methanobacterium thermoautotrophicum), this protein is UPF0288 protein MTH_1865.